Reading from the N-terminus, the 283-residue chain is Large ribosomal subunit protein uL2c (283 aa).

The disordered stretch occupies residues 229 to 274; that stretch reads GVVMNPIDHPHGGGEGKVPIGRKKPLTPWGHPALGRKSRKRRKYSD. The span at 262 to 271 shows a compositional bias: basic residues; that stretch reads LGRKSRKRRK.

Belongs to the universal ribosomal protein uL2 family. In terms of assembly, part of the 50S ribosomal subunit.

It localises to the plastid. The sequence is that of Large ribosomal subunit protein uL2c (rpl2) from Aneura mirabilis (Parasitic liverwort).